Here is a 44-residue protein sequence, read N- to C-terminus: Thymosin beta-12 (44 aa).

2 stretches are compositionally biased toward basic and acidic residues: residues 1–25 (MSDK…ETQE) and 33–44 (ETIEQEKAAATS). The tract at residues 1–44 (MSDKPDISEVTSFDKTKLKKTETQEKNPLPSKETIEQEKAAATS) is disordered. At S2 the chain carries N-acetylserine.

Belongs to the thymosin beta family.

It localises to the cytoplasm. The protein localises to the cytoskeleton. Plays an important role in the organization of the cytoskeleton. Binds to and sequesters actin monomers (G actin) and therefore inhibits actin polymerization. The sequence is that of Thymosin beta-12 from Lateolabrax japonicus (Japanese sea perch).